The chain runs to 403 residues: 4,4'-dithiodibutanoate disulfide reductase (403 aa).

Q103 serves as a coordination point for FMN. Catalysis depends on Y173, which acts as the Proton donor. FMN is bound at residue A348–R349.

This sequence belongs to the NADH:flavin oxidoreductase/NADH oxidase family. FMN is required as a cofactor.

The catalysed reaction is 2 4-sulfanylbutanoate + NAD(+) = 4,4'-disulfanyldibutanoate + NADH + H(+). Inactivated by cobalt, nickel and zinc ions. Functionally, involved in the degradation of the organic disulfide 4,4'-dithiodibutyric acid (DTDB). Catalyzes the initial cleavage of DTDB into 2 molecules of 4-mercaptobutyric acid (4MB). Low activities are observed with other disulfide compounds, such as 3,3'-dithiodipropionic acid DTDP, 3,3'-thiodipropionic acid TDP and DTNB. The polypeptide is 4,4'-dithiodibutanoate disulfide reductase (Rhodococcus erythropolis (Arthrobacter picolinophilus)).